The following is a 419-amino-acid chain: GTPase Obg (419 aa).

The Obg domain occupies 1–156 (MRFVDYVSIE…FYLDLQLKVM (156 aa)). The region spanning 157–334 (ADIGLVGKPN…LEEKQKKLEI (178 aa)) is the OBG-type G domain. Residues 163–170 (GKPNAGKS), 188–192 (FTTLV), 209–212 (DLPG), 278–281 (NKCD), and 315–317 (NII) contribute to the GTP site. Mg(2+) is bound by residues serine 170 and threonine 190. The OCT domain occupies 342–419 (IEFNLKAPFL…RIYEFEFHWN (78 aa)).

This sequence belongs to the TRAFAC class OBG-HflX-like GTPase superfamily. OBG GTPase family. In terms of assembly, monomer. The cofactor is Mg(2+).

Its subcellular location is the cytoplasm. Its function is as follows. An essential GTPase which binds GTP, GDP and possibly (p)ppGpp with moderate affinity, with high nucleotide exchange rates and a fairly low GTP hydrolysis rate. Plays a role in control of the cell cycle, stress response, ribosome biogenesis and in those bacteria that undergo differentiation, in morphogenesis control. This is GTPase Obg from Mesomycoplasma hyopneumoniae (strain 232) (Mycoplasma hyopneumoniae).